The chain runs to 351 residues: Putative NBPF family member NBPF5 (351 aa).

Coiled-coil stretches lie at residues 10–43 and 69–115; these read SERAEMNILEINQELRSQLAESNQQFRDLKEKFL and DSVL…KLRE. A disordered region spans residues 157–285; it reads HLVHKLSPEN…VPPRHHDKSN (129 aa). A compositionally biased stretch (acidic residues) spans 165–179; it reads ENDEDEDEDEDDKDE. In terms of domain architecture, Olduvai spans 174-261; that stretch reads EDDKDEEVEK…EEEEALNIPP (88 aa). The span at 192–202 shows a compositional bias: basic and acidic residues; that stretch reads EVQKTEEKEVP. The span at 214–226 shows a compositional bias: low complexity; that stretch reads SNSHNPSNSNQPH. Composition is skewed to basic and acidic residues over residues 232 to 251 and 264 to 273; these read TFKEHEVDSALVVESEHPHD and QNDHEEEEGK.

The protein belongs to the NBPF family. Expressed in brain and medulla.

It localises to the cytoplasm. This is Putative NBPF family member NBPF5 from Homo sapiens (Human).